A 456-amino-acid polypeptide reads, in one-letter code: Phosphomannomutase (456 aa).

Ser-98 (phosphoserine intermediate) is an active-site residue. Positions 98, 245, 247, and 249 each coordinate Mg(2+).

Belongs to the phosphohexose mutase family. It depends on Mg(2+) as a cofactor.

The catalysed reaction is alpha-D-mannose 1-phosphate = D-mannose 6-phosphate. It functions in the pathway nucleotide-sugar biosynthesis; GDP-alpha-D-mannose biosynthesis; alpha-D-mannose 1-phosphate from D-fructose 6-phosphate: step 2/2. Its pathway is bacterial outer membrane biogenesis; LPS O-antigen biosynthesis. In terms of biological role, involved in GDP-mannose biosynthesis which serves as the activated sugar nucleotide precursor for mannose residues in cell surface polysaccharides. This enzyme participates in synthesis of the LPS O antigen. In Salmonella montevideo, this protein is Phosphomannomutase (manB).